The sequence spans 206 residues: Translation initiation factor IF-3 (206 aa).

It belongs to the IF-3 family. In terms of assembly, monomer.

It is found in the cytoplasm. IF-3 binds to the 30S ribosomal subunit and shifts the equilibrium between 70S ribosomes and their 50S and 30S subunits in favor of the free subunits, thus enhancing the availability of 30S subunits on which protein synthesis initiation begins. The chain is Translation initiation factor IF-3 from Shigella flexneri.